A 317-amino-acid polypeptide reads, in one-letter code: Testis-expressed protein 19.2 (317 aa).

A compositionally biased stretch (acidic residues) spans M64–E75. The segment at M64–Q113 is disordered. Residues Q101–L145 are important for interaction with piRNA.

Interacts with UBR2. Interacts with piRNA-associated proteins DDX4, EDC4, MAEL, PIWIL1, PIWIL2, RANBP9 and TDRD6. In terms of tissue distribution, specifically expressed in somatic cells of male gonad lineage.

It is found in the cytoplasm. Functionally, may be required during spermatogenesis, probably by participating in the repression of retrotransposable elements and prevent their mobilization. With its paralog, Tex19.1, collaborates with the Piwi-interacting RNA (piRNA) pathway, which mediates the repression of transposable elements during meiosis by forming complexes composed of piRNAs and Piwi proteins. Interacts with Piwi proteins and directly binds piRNAs, a class of 24 to 30 nucleotide RNAs that are generated by a Dicer-independent mechanism and are primarily derived from transposons and other repeated sequence elements. This is Testis-expressed protein 19.2 (Tex19.2) from Mus musculus (Mouse).